The primary structure comprises 460 residues: A-type ATP synthase subunit B 1 (460 aa).

The protein belongs to the ATPase alpha/beta chains family. As to quaternary structure, has multiple subunits with at least A(3), B(3), C, D, E, F, H, I and proteolipid K(x).

Its subcellular location is the cell membrane. Its function is as follows. Component of the A-type ATP synthase that produces ATP from ADP in the presence of a proton gradient across the membrane. The B chain is a regulatory subunit. In Methanospirillum hungatei JF-1 (strain ATCC 27890 / DSM 864 / NBRC 100397 / JF-1), this protein is A-type ATP synthase subunit B 1.